The chain runs to 447 residues: Oxysterols receptor LXR-alpha (447 aa).

Disordered regions lie at residues 1–37 (MSLW…GGSS) and 65–88 (ALLT…KKGP). Positions 1–96 (MSLWLGAPVP…GPAPKMLGNE (96 aa)) are transactivation AF-1; required for ligand-independent transactivation function. The segment covering 24–37 (GAQDASSQAQGGSS) has biased composition (low complexity). The segment at residues 95–170 (NELCSVCGDK…AGMREECVLS (76 aa)) is a DNA-binding region (nuclear receptor). 2 NR C4-type zinc fingers span residues 98–118 (CSVC…CEGC) and 134–158 (CHSG…LRKC). The segment at 180–202 (KRQEEEQAHATSLPPRASSPPQI) is disordered. The segment at 205 to 447 (QLSPEQLGMI…LLSEIWDVHE (243 aa)) is transactivation AF-2; required for ligand-dependent transactivation function; mediates interaction with CCAR2. The NR LBD domain occupies 209–447 (EQLGMIEKLV…LLSEIWDVHE (239 aa)).

The protein belongs to the nuclear hormone receptor family. NR1 subfamily. As to quaternary structure, heterodimer of NR1H3 and RXR (retinoic acid receptor). Interacts with CCAR2 (via N-terminus) in a ligand-independent manner. Interacts with SIRT1 and this interaction is inhibited by CCAR2. Interacts with GPS2. Ubiquitinated by UBR5, leading to its degradation: UBR5 specifically recognizes and binds ligand-bound NR1H3 when it is not associated with coactivators (NCOAs). In presence of NCOAs, the UBR5-degron is not accessible, preventing its ubiquitination and degradation. In terms of tissue distribution, visceral organs specific expression. Strong expression was found in liver, kidney and intestine followed by spleen and to a lesser extent the adrenals.

It is found in the nucleus. The protein localises to the cytoplasm. Nuclear receptor that exhibits a ligand-dependent transcriptional activation activity. Interaction with retinoic acid receptor (RXR) shifts RXR from its role as a silent DNA-binding partner to an active ligand-binding subunit in mediating retinoid responses through target genes defined by LXRES. LXRES are DR4-type response elements characterized by direct repeats of two similar hexanuclotide half-sites spaced by four nucleotides. Plays an important role in the regulation of cholesterol homeostasis, regulating cholesterol uptake through MYLIP-dependent ubiquitination of LDLR, VLDLR and LRP8. Interplays functionally with RORA for the regulation of genes involved in liver metabolism. Induces LPCAT3-dependent phospholipid remodeling in endoplasmic reticulum (ER) membranes of hepatocytes, driving SREBF1 processing and lipogenesis. Via LPCAT3, triggers the incorporation of arachidonate into phosphatidylcholines of ER membranes, increasing membrane dynamics and enabling triacylglycerols transfer to nascent very low-density lipoprotein (VLDL) particles. Via LPCAT3 also counteracts lipid-induced ER stress response and inflammation, likely by modulating SRC kinase membrane compartmentalization and limiting the synthesis of lipid inflammatory mediators. The chain is Oxysterols receptor LXR-alpha (NR1H3) from Homo sapiens (Human).